We begin with the raw amino-acid sequence, 286 residues long: MEIKSDGTYVDLTLGRAGHSLEILKKLINGRLICFDKDNEAIKESYKKLQKISPNFTLIQNDFRFLKAELEKLGINEVDGILADLGVSSPQIDDPTRGFSYSQEGPLDMRMNQQNSFSAKDIIDNFDESELTKILIKNADVKLANLVAKAIVAKRPIKSTSELVEIIKNALPAKIVREKNPAKAVFQALRIEVNDELGALTAMLADATQLLKKDGKILIITFHSKEDSIVKNFFQKQNYVDPRLNKLPINIQKIWKQKIIFPSEDEKLQNNRSRSAKLRVVKKLSI.

S-adenosyl-L-methionine is bound by residues 17 to 19, aspartate 36, phenylalanine 63, aspartate 84, and glutamine 91; that span reads AGH.

Belongs to the methyltransferase superfamily. RsmH family.

Its subcellular location is the cytoplasm. The catalysed reaction is cytidine(1402) in 16S rRNA + S-adenosyl-L-methionine = N(4)-methylcytidine(1402) in 16S rRNA + S-adenosyl-L-homocysteine + H(+). Specifically methylates the N4 position of cytidine in position 1402 (C1402) of 16S rRNA. The chain is Ribosomal RNA small subunit methyltransferase H from Metamycoplasma arthritidis (strain 158L3-1) (Mycoplasma arthritidis).